The primary structure comprises 470 residues: Protein C-ets-2 (470 aa).

A PNT domain is found at 85–170 (ATFSGFKKEQ…EHLEQMIKEN (86 aa)). At Ser225 the chain carries Phosphoserine. Positions 270–291 (ASGKPRDHDSAETGGDSFESSE) are disordered. 3 positions are modified to phosphoserine: Ser296, Ser299, and Ser302. Positions 364–444 (IQLWQFLLEL…SGKRYVYRFV (81 aa)) form a DNA-binding region, ETS.

The protein belongs to the ETS family. Post-translationally, phosphorylation by CDK10 at Ser-225 may create a phosphodegron that targets ETS2 for proteasomal degradation.

The protein resides in the nucleus. Its function is as follows. Transcription factor activating transcription. Binds specifically the GGA DNA motif in gene promoters and stimulates transcription of those genes. This is Protein C-ets-2 (ETS2) from Bos taurus (Bovine).